The following is a 253-amino-acid chain: Octanoyltransferase (253 aa).

The BPL/LPL catalytic domain occupies 47-236 (PETPDQVWLV…ALCEVLAARE (190 aa)). Substrate-binding positions include 87-94 (RGGQITYH), 159-161 (ALG), and 172-174 (GVS). The active-site Acyl-thioester intermediate is the Cys190.

Belongs to the LipB family.

It is found in the cytoplasm. It catalyses the reaction octanoyl-[ACP] + L-lysyl-[protein] = N(6)-octanoyl-L-lysyl-[protein] + holo-[ACP] + H(+). Its pathway is protein modification; protein lipoylation via endogenous pathway; protein N(6)-(lipoyl)lysine from octanoyl-[acyl-carrier-protein]: step 1/2. Its function is as follows. Catalyzes the transfer of endogenously produced octanoic acid from octanoyl-acyl-carrier-protein onto the lipoyl domains of lipoate-dependent enzymes. Lipoyl-ACP can also act as a substrate although octanoyl-ACP is likely to be the physiological substrate. In Cupriavidus pinatubonensis (strain JMP 134 / LMG 1197) (Cupriavidus necator (strain JMP 134)), this protein is Octanoyltransferase.